We begin with the raw amino-acid sequence, 430 residues long: Adenylosuccinate synthetase (430 aa).

Residues 12–18 and 40–42 each bind GTP; these read GDEGKGK and GHT. The Proton acceptor role is filled by aspartate 13. Residues aspartate 13 and glycine 40 each contribute to the Mg(2+) site. Residues 13-16, 38-41, threonine 130, arginine 144, glutamine 224, threonine 239, and arginine 303 each bind IMP; these read DEGK and NAGH. The Proton donor role is filled by histidine 41. Residue 299 to 305 participates in substrate binding; that stretch reads VVTGRPR. GTP is bound by residues arginine 305, 331–333, and 413–415; these read KLD and STS.

Belongs to the adenylosuccinate synthetase family. As to quaternary structure, homodimer. It depends on Mg(2+) as a cofactor.

The protein resides in the cytoplasm. The catalysed reaction is IMP + L-aspartate + GTP = N(6)-(1,2-dicarboxyethyl)-AMP + GDP + phosphate + 2 H(+). Its pathway is purine metabolism; AMP biosynthesis via de novo pathway; AMP from IMP: step 1/2. Functionally, plays an important role in the de novo pathway of purine nucleotide biosynthesis. Catalyzes the first committed step in the biosynthesis of AMP from IMP. The sequence is that of Adenylosuccinate synthetase from Azorhizobium caulinodans (strain ATCC 43989 / DSM 5975 / JCM 20966 / LMG 6465 / NBRC 14845 / NCIMB 13405 / ORS 571).